A 278-amino-acid polypeptide reads, in one-letter code: Elongation factor Ts (278 aa).

An involved in Mg(2+) ion dislocation from EF-Tu region spans residues 80–83; sequence TDFV.

This sequence belongs to the EF-Ts family.

Its subcellular location is the cytoplasm. Its function is as follows. Associates with the EF-Tu.GDP complex and induces the exchange of GDP to GTP. It remains bound to the aminoacyl-tRNA.EF-Tu.GTP complex up to the GTP hydrolysis stage on the ribosome. This chain is Elongation factor Ts, found in Paenarthrobacter aurescens (strain TC1).